We begin with the raw amino-acid sequence, 194 residues long: Large ribosomal subunit protein bL9 (194 aa).

The disordered stretch occupies residues 167–194; the sequence is EDRAAEAEAASDMAAGGAGSFEGDHYES.

The protein belongs to the bacterial ribosomal protein bL9 family.

Its function is as follows. Binds to the 23S rRNA. In Caulobacter sp. (strain K31), this protein is Large ribosomal subunit protein bL9.